A 143-amino-acid chain; its full sequence is Nucleoside diphosphate kinase (143 aa).

ATP-binding residues include lysine 11, phenylalanine 59, arginine 87, threonine 93, arginine 104, and asparagine 114. Residue histidine 117 is the Pros-phosphohistidine intermediate of the active site.

The protein belongs to the NDK family. Homotetramer. Mg(2+) is required as a cofactor.

It is found in the cytoplasm. The enzyme catalyses a 2'-deoxyribonucleoside 5'-diphosphate + ATP = a 2'-deoxyribonucleoside 5'-triphosphate + ADP. It carries out the reaction a ribonucleoside 5'-diphosphate + ATP = a ribonucleoside 5'-triphosphate + ADP. In terms of biological role, major role in the synthesis of nucleoside triphosphates other than ATP. The ATP gamma phosphate is transferred to the NDP beta phosphate via a ping-pong mechanism, using a phosphorylated active-site intermediate. This chain is Nucleoside diphosphate kinase, found in Cronobacter sakazakii (strain ATCC BAA-894) (Enterobacter sakazakii).